We begin with the raw amino-acid sequence, 312 residues long: MMSVLVKEVIEKLRLDIVYGEPELLEKEINIADITRPGLEMTGYFDYYTPERIQLLGMKEWSYLISMPSNSRYEVLKKMFLPETPAVIVARGLVVPEEMLKAARECKIAILTSRAATSRLSGELSSYLDSRLAERTSVHGVLMDIYGMGVLIQGDSGIGKSETGLELVKRGHRLVADDRVDIFAKDEITLWGEPAEILKHLIEIRGVGIIDVMSLYGASAVKDSSQVQLAVYLENYDTHKTFDRLGNNAEELEVSGVAIPRIRIPVKTGRNISVVIEAAAMNYRAKEMGFDATRLFDERLTSLIARNEVQNA.

Residues H139 and K160 contribute to the active site. 154–161 contacts ATP; the sequence is GDSGIGKS. S161 contributes to the Mg(2+) binding site. The active-site Proton acceptor; for phosphorylation activity. Proton donor; for dephosphorylation activity is the D178. Residues 202–211 form an important for the catalytic mechanism of both phosphorylation and dephosphorylation region; the sequence is IEIRGVGIID. E203 is a Mg(2+) binding site. The active site involves R244. The important for the catalytic mechanism of dephosphorylation stretch occupies residues 265-270; that stretch reads PVKTGR.

Belongs to the HPrK/P family. Homohexamer. Requires Mg(2+) as cofactor.

The enzyme catalyses [HPr protein]-L-serine + ATP = [HPr protein]-O-phospho-L-serine + ADP + H(+). It catalyses the reaction [HPr protein]-O-phospho-L-serine + phosphate + H(+) = [HPr protein]-L-serine + diphosphate. Catalyzes the ATP- as well as the pyrophosphate-dependent phosphorylation of a specific serine residue in HPr, a phosphocarrier protein of the phosphoenolpyruvate-dependent sugar phosphotransferase system (PTS). HprK/P also catalyzes the pyrophosphate-producing, inorganic phosphate-dependent dephosphorylation (phosphorolysis) of seryl-phosphorylated HPr (P-Ser-HPr). The two antagonistic activities of HprK/P are regulated by several intracellular metabolites, which change their concentration in response to the absence or presence of rapidly metabolisable carbon sources (glucose, fructose, etc.) in the growth medium. Therefore, by controlling the phosphorylation state of HPr, HPrK/P is a sensor enzyme that plays a major role in the regulation of carbon metabolism and sugar transport: it mediates carbon catabolite repression (CCR), and regulates PTS-catalyzed carbohydrate uptake and inducer exclusion. The chain is HPr kinase/phosphorylase from Streptococcus pneumoniae (strain ATCC BAA-255 / R6).